The primary structure comprises 248 residues: Probable transcriptional regulatory protein BRADO1143 (248 aa).

This sequence belongs to the TACO1 family.

It localises to the cytoplasm. The chain is Probable transcriptional regulatory protein BRADO1143 from Bradyrhizobium sp. (strain ORS 278).